A 309-amino-acid polypeptide reads, in one-letter code: Taste receptor type 2 member 8 (309 aa).

Over 1–7 (MFSPADN) the chain is Extracellular. A helical membrane pass occupies residues 8 to 28 (IFIILITGEFILGILGNGYIA). At 29–50 (LVNWIDWIKKKKISTVDYILTN) the chain is on the cytoplasmic side. A helical membrane pass occupies residues 51–71 (LVIARICLISVMVVNGIVIVL). Residues 72–82 (NPDVYTKNKQQ) are Extracellular-facing. The chain crosses the membrane as a helical span at residues 83-103 (IVIFTFWTFANYLNMWITTCL). The Cytoplasmic portion of the chain corresponds to 104-131 (NVFYFLKIASSSHPLFLWLKWKIDMVVH). The helical transmembrane segment at 132–152 (WILLGCFAISLLVSLIAAIVL) threads the bilayer. The Extracellular segment spans residues 153-184 (SCDYRFHAIAKHKRNITEMFHVSKIPYFEPLT). Asn167 carries an N-linked (GlcNAc...) asparagine glycan. Residues 185 to 205 (LFNLFAIVPFIVSLISFFLLV) form a helical membrane-spanning segment. Residues 206-239 (RSLWRHTKQIKLYATGSRDPSTEVHVRAIKTMTS) lie on the Cytoplasmic side of the membrane. A helical membrane pass occupies residues 240-260 (FIFFFFLYYISSILMTFSYLM). The Extracellular segment spans residues 261 to 266 (TKYKLA). A helical transmembrane segment spans residues 267–287 (VEFGEIAAILYPLGHSLILIV). Residues 288–309 (LNNKLRQTFVRMLTCRKIACMI) are Cytoplasmic-facing.

Belongs to the G-protein coupled receptor T2R family. As to expression, expressed in subsets of taste receptor cells of the tongue and palate epithelium and exclusively in gustducin-positive cells.

It localises to the membrane. In terms of biological role, receptor that may play a role in the perception of bitterness and is gustducin-linked. May play a role in sensing the chemical composition of the gastrointestinal content. The activity of this receptor may stimulate alpha gustducin, mediate PLC-beta-2 activation and lead to the gating of TRPM5. This is Taste receptor type 2 member 8 (TAS2R8) from Homo sapiens (Human).